The following is a 320-amino-acid chain: Olfactory receptor 7C1 (320 aa).

Topologically, residues 1–25 are extracellular; that stretch reads METGNQTHAQEFLLLGFSATSEIQF. The N-linked (GlcNAc...) asparagine glycan is linked to Asn5. The chain crosses the membrane as a helical span at residues 26–46; sequence ILFGLFLSMYLVTFTGNLLII. The Cytoplasmic segment spans residues 47 to 54; sequence LAICSDSH. Residues 55-75 form a helical membrane-spanning segment; that stretch reads LHTPMYFFLSNLSFADLCFTS. Topologically, residues 76-99 are extracellular; the sequence is TTVPKMLLNILTQNKFITYAGCLS. Cysteines 97 and 189 form a disulfide. The chain crosses the membrane as a helical span at residues 100–120; the sequence is QIFFFTSFGCLDNLLLTVMAY. Topologically, residues 121–139 are cytoplasmic; that stretch reads DRFVAVCHPLHYTVIMNPQ. Residues 140-160 traverse the membrane as a helical segment; the sequence is LCGLLVLGSWCISVMGSLLET. The Extracellular portion of the chain corresponds to 161–197; sequence LTVLRLSFCTEMEIPHFFCDLLEVLKLACSDTFINNV. The chain crosses the membrane as a helical span at residues 198-217; the sequence is VIYFATGVLGVISFTGIFFS. Residues 218–237 lie on the Cytoplasmic side of the membrane; the sequence is YYKIVFSILRISSAGRKHKA. The chain crosses the membrane as a helical span at residues 238 to 258; the sequence is FSTCGSHLSVVTLFYGTGFGV. Residues 259–271 lie on the Extracellular side of the membrane; it reads YLSSAATPSSRTS. Residues 272-292 traverse the membrane as a helical segment; it reads LVASVMYTMVTPMLNPFIYSL. At 293 to 313 the chain is on the cytoplasmic side; that stretch reads RNTDMKRALGRLLSRATFFNG.

It belongs to the G-protein coupled receptor 1 family.

Its subcellular location is the cell membrane. In terms of biological role, odorant receptor. This is Olfactory receptor 7C1 (OR7C1) from Homo sapiens (Human).